The sequence spans 421 residues: Serine hydroxymethyltransferase (421 aa).

Residues L121 and 125–127 (GHL) each bind (6S)-5,6,7,8-tetrahydrofolate. Position 229 is an N6-(pyridoxal phosphate)lysine (K229).

It belongs to the SHMT family. In terms of assembly, homodimer. Requires pyridoxal 5'-phosphate as cofactor.

Its subcellular location is the cytoplasm. It catalyses the reaction (6R)-5,10-methylene-5,6,7,8-tetrahydrofolate + glycine + H2O = (6S)-5,6,7,8-tetrahydrofolate + L-serine. Its pathway is one-carbon metabolism; tetrahydrofolate interconversion. The protein operates within amino-acid biosynthesis; glycine biosynthesis; glycine from L-serine: step 1/1. Catalyzes the reversible interconversion of serine and glycine with tetrahydrofolate (THF) serving as the one-carbon carrier. This reaction serves as the major source of one-carbon groups required for the biosynthesis of purines, thymidylate, methionine, and other important biomolecules. Also exhibits THF-independent aldolase activity toward beta-hydroxyamino acids, producing glycine and aldehydes, via a retro-aldol mechanism. The chain is Serine hydroxymethyltransferase from Haemophilus influenzae (strain 86-028NP).